The chain runs to 57 residues: Large ribosomal subunit protein bL32 (57 aa).

This sequence belongs to the bacterial ribosomal protein bL32 family.

The polypeptide is Large ribosomal subunit protein bL32 (Geobacillus kaustophilus (strain HTA426)).